We begin with the raw amino-acid sequence, 296 residues long: Myeloid differentiation primary response protein MyD88 (296 aa).

One can recognise a Death domain in the interval 54-109; that stretch reads MGFEYLEIRELETRPDPTRSLLDAWQGRSGASVGRLLELLALLDREDILKELKSRI. An intermediate domain region spans residues 110–155; that stretch reads EEDCQKYLGKQQNQESEKPLQVARVESSVPQTKELGGITTLDDPLG. Residues 159-293 enclose the TIR domain; sequence ELFDAFICYC…WFWTRLAKAL (135 aa). At serine 244 the chain carries Phosphoserine.

In terms of assembly, homodimer. Also forms heterodimers with TIRAP. Binds to TLR2, TLR4, IRAK1, IRAK2 and IRAK4 via their respective TIR domains. Interacts with IL18R1. Interacts with BMX, IL1RL1, IKBKE and IRF7. Interacts with LRRFIP1 and LRRFIP2; this interaction positively regulates Toll-like receptor (TLR) signaling in response to agonist. Interacts with FLII. LRRFIP1 and LRRFIP2 compete with FLII for MYD88-binding. Interacts with IRF1. Upon IL1B treatment, forms a complex with PELI1, IRAK1, IRAK4 and TRAF6; this complex recruits MAP3K7/TAK1, TAB1 and TAB2 to mediate NF-kappa-B activation. Direct binding of SMAD6 to PELI1 prevents the complex formation and hence negatively regulates IL1R-TLR signaling and eventually NF-kappa-B-mediated gene expression. May interact with PIK3AP1. Interacts (via TIR domain) with DHX9 (via H2A and OB-fold regions); this interaction is direct. Interacts with OTUD4 deubiquitinase; the interaction is direct. In terms of processing, ubiquitinated; undergoes 'Lys-63'-linked polyubiquitination. OTUD4 specifically hydrolyzes 'Lys-63'-linked polyubiquitinated MYD88. Deubiquitinated by USP3 that cleaves 'Lys-63'-linked ubiquitin chains leading to inhibition of MYD88-induced NF-kappa-B signaling. As to expression, detected in bone marrow. Isoform 1 is expressed in testis, kidney, lung, ovary, adrenal gland, provstate, thymus and heart, and weakly in skeletal muscle, liver, spleen and brain. Isoform 2 is mainly expressed in the spleen and weakly in brain.

Its subcellular location is the cytoplasm. The protein localises to the nucleus. Its function is as follows. Adapter protein involved in the Toll-like receptor and IL-1 receptor signaling pathway in the innate immune response. Acts via IRAK1, IRAK2, IRF7 and TRAF6, leading to NF-kappa-B activation, cytokine secretion and the inflammatory response. Increases IL-8 transcription. Involved in IL-18-mediated signaling pathway. Activates IRF1 resulting in its rapid migration into the nucleus to mediate an efficient induction of IFN-beta, NOS2/INOS, and IL12A genes. Upon TLR8 activation by GU-rich single-stranded RNA (GU-rich RNA) derived from viruses, induces IL1B release through NLRP3 inflammasome activation. MyD88-mediated signaling in intestinal epithelial cells is crucial for maintenance of gut homeostasis and controls the expression of the antimicrobial lectin REG3G in the small intestine. Mediates leukocyte recruitment at the inflammatory site. Functionally, defective in its ability to induce IRAK phosphorylation and NF-kappa-B activation and can function as a negative regulator of activation by IL-1 or lipopolysaccharide (LPS). The sequence is that of Myeloid differentiation primary response protein MyD88 from Mus musculus (Mouse).